We begin with the raw amino-acid sequence, 248 residues long: tRNA pseudouridine synthase A (248 aa).

Asp53 functions as the Nucleophile in the catalytic mechanism. Tyr111 provides a ligand contact to substrate.

The protein belongs to the tRNA pseudouridine synthase TruA family. In terms of assembly, homodimer.

It catalyses the reaction uridine(38/39/40) in tRNA = pseudouridine(38/39/40) in tRNA. Formation of pseudouridine at positions 38, 39 and 40 in the anticodon stem and loop of transfer RNAs. The sequence is that of tRNA pseudouridine synthase A from Listeria monocytogenes serovar 1/2a (strain ATCC BAA-679 / EGD-e).